A 357-amino-acid polypeptide reads, in one-letter code: uncharacterized protein (357 aa).

Residues 27-242 (HFGNTVTFER…VSSVRLNFPK (216 aa)) form the Radical SAM core domain. Positions 44, 50, and 53 each coordinate [4Fe-4S] cluster.

[4Fe-4S] cluster is required as a cofactor.

This is an uncharacterized protein from Methanocaldococcus jannaschii (strain ATCC 43067 / DSM 2661 / JAL-1 / JCM 10045 / NBRC 100440) (Methanococcus jannaschii).